A 282-amino-acid chain; its full sequence is NAD-dependent protein deacetylase 1 (282 aa).

In terms of domain architecture, Deacetylase sirtuin-type spans 1 to 282 (MTVGRAESPE…ADELSPLPTH (282 aa)). NAD(+) contacts are provided by residues 25–45 (GAGI…SPPS) and 101–104 (QNVD). His-119 (proton acceptor) is an active-site residue. Zn(2+) contacts are provided by Cys-127, Cys-130, Cys-181, and Cys-184. Residues 221–223 (GSS), 247–249 (NRG), and Cys-265 contribute to the NAD(+) site.

The protein belongs to the sirtuin family. Class II subfamily. Requires Zn(2+) as cofactor.

It localises to the cytoplasm. The catalysed reaction is N(6)-acetyl-L-lysyl-[protein] + NAD(+) + H2O = 2''-O-acetyl-ADP-D-ribose + nicotinamide + L-lysyl-[protein]. In terms of biological role, NAD-dependent protein deacetylase which modulates the activities of several enzymes which are inactive in their acetylated form. This Mycobacterium avium (strain 104) protein is NAD-dependent protein deacetylase 1.